Reading from the N-terminus, the 746-residue chain is GTPase-activating protein GYP7 (746 aa).

2 positions are modified to phosphoserine: S265 and S339. Residues 385–633 (LENDSLRGKV…HIWENFWTFY (249 aa)) form the Rab-GAP TBC domain. The interval 470–505 (TIDGLPPPPQQLPANENNSTSPESANDESDDADDGV) is disordered. Over residues 481 to 491 (LPANENNSTSP) the composition is skewed to polar residues.

The protein resides in the cytoplasm. Functionally, GTPase-activating protein (GAP) that most effectively accelerates the intrinsic GTPase activity of Ypt/Rab-type GTPase YPT7 involved in vacuole docking and fusion. It is also active, but to a lesser extent, on YPT31, YPT32, YPT1, YPT6 and SEC4. Provides a catalytic arginine (arginine finger) in trans to accelerate the GTP hydrolysis rate of the substrate GTPase. The polypeptide is GTPase-activating protein GYP7 (GYP7) (Saccharomyces cerevisiae (strain ATCC 204508 / S288c) (Baker's yeast)).